A 799-amino-acid polypeptide reads, in one-letter code: Dipeptidyl peptidase family member 1 (799 aa).

Topologically, residues 1-31 (MTAEADLLEGYDEELGGNESQKRDCKGITTA) are cytoplasmic. The chain crosses the membrane as a helical; Signal-anchor for type II membrane protein span at residues 32–52 (IVVVLLILVMIFAALVFFTPL). Topologically, residues 53 to 799 (FAAKSFGSWR…FLRQCFYTDK (747 aa)) are lumenal. 4 N-linked (GlcNAc...) asparagine glycosylation sites follow: Asn64, Asn138, Asn267, and Asn335. Cysteines 474 and 477 form a disulfide. N-linked (GlcNAc...) asparagine glycosylation occurs at Asn481. Cys482 and Cys500 form a disulfide bridge. Asn512 carries N-linked (GlcNAc...) asparagine glycosylation. Residues Ser669, Asp742, and His774 each act as charge relay system in the active site. Cys689 and Cys794 are joined by a disulfide.

It belongs to the peptidase S9B family. DPPIV subfamily.

Its subcellular location is the cell membrane. Functionally, removes N-terminal dipeptides sequentially from polypeptides. Essential for control of distal tip cell migration. The sequence is that of Dipeptidyl peptidase family member 1 (dpf-1) from Caenorhabditis elegans.